Here is a 113-residue protein sequence, read N- to C-terminus: MKRRSVCVGDTVYVLAGNDKGKQGKVLSCLREKNKVVVEGVNVRTKNIKRSQENPKGKRINIEAPIHISNVRLSIDGAPAKLSVKVTENGRELWNKSSDGTSKLYRSVKERKG.

It belongs to the universal ribosomal protein uL24 family. Part of the 50S ribosomal subunit.

One of two assembly initiator proteins, it binds directly to the 5'-end of the 23S rRNA, where it nucleates assembly of the 50S subunit. Its function is as follows. One of the proteins that surrounds the polypeptide exit tunnel on the outside of the subunit. The protein is Large ribosomal subunit protein uL24 of Chlamydia abortus (strain DSM 27085 / S26/3) (Chlamydophila abortus).